Here is a 418-residue protein sequence, read N- to C-terminus: Tyrosine--tRNA ligase (418 aa).

The 'HIGH' region signature appears at 42-51 (PTAPDLHLGH). The short motif at 226–230 (KMSKS) is the 'KMSKS' region element. Lysine 229 contacts ATP. In terms of domain architecture, S4 RNA-binding spans 339 to 400 (VRLVALLTKS…GKRNFAKVRL (62 aa)).

This sequence belongs to the class-I aminoacyl-tRNA synthetase family. TyrS type 2 subfamily. In terms of assembly, homodimer.

The protein localises to the cytoplasm. The enzyme catalyses tRNA(Tyr) + L-tyrosine + ATP = L-tyrosyl-tRNA(Tyr) + AMP + diphosphate + H(+). Catalyzes the attachment of tyrosine to tRNA(Tyr) in a two-step reaction: tyrosine is first activated by ATP to form Tyr-AMP and then transferred to the acceptor end of tRNA(Tyr). This is Tyrosine--tRNA ligase from Xylella fastidiosa (strain 9a5c).